Reading from the N-terminus, the 122-residue chain is Large ribosomal subunit protein bL12 (122 aa).

It belongs to the bacterial ribosomal protein bL12 family. Homodimer. Part of the ribosomal stalk of the 50S ribosomal subunit. Forms a multimeric L10(L12)X complex, where L10 forms an elongated spine to which 2 to 4 L12 dimers bind in a sequential fashion. Binds GTP-bound translation factors.

In terms of biological role, forms part of the ribosomal stalk which helps the ribosome interact with GTP-bound translation factors. Is thus essential for accurate translation. The sequence is that of Large ribosomal subunit protein bL12 from Streptococcus thermophilus (strain ATCC BAA-491 / LMD-9).